The chain runs to 433 residues: MTAIASIWAREILDSRGNPTVEVEVTLDSGYIGRAAVPSGASTGTREALELRDGDKQRYNGKGVLKVVEAVNGPISEAVIGIDALRQVQVDNTLIDLDGTDNKSKLGANAILGVSLATARAAAEAVGLPLYQYIGGTNAKVLPVPLMNVINGGAHAPNNLDIQEFMIMPVGAETFRDALRMGAEIFHTLKTILSADGHVTSVGDEGGFAPHLKSHDEAFQYLVKAIEEAGYNPGSEVMLAIDVAASEFYKDKRYFLTEYKTPLNSEEMIEWLKGFTSRYPLISIEDGLAENDWDGWRELTVELGNDIQLVGDDIFVTNPIMLSQGVEEGIGNSILIKVNQIGTLTETLDTIELAKQSAYTTIVSHRSGETEDSFIADLAVGINAGQIKTGSLSRSDRLAKYNQLLRIEEELEDSAIYYGPVFSESNHSCCDHT.

Gln163 contributes to the (2R)-2-phosphoglycerate binding site. The active-site Proton donor is Glu205. Mg(2+) is bound by residues Asp242, Glu285, and Asp312. Residues Lys337, Arg366, Ser367, and Lys388 each contribute to the (2R)-2-phosphoglycerate site. Lys337 acts as the Proton acceptor in catalysis.

Belongs to the enolase family. It depends on Mg(2+) as a cofactor.

It localises to the cytoplasm. Its subcellular location is the secreted. The protein resides in the cell surface. The catalysed reaction is (2R)-2-phosphoglycerate = phosphoenolpyruvate + H2O. It participates in carbohydrate degradation; glycolysis; pyruvate from D-glyceraldehyde 3-phosphate: step 4/5. Its function is as follows. Catalyzes the reversible conversion of 2-phosphoglycerate (2-PG) into phosphoenolpyruvate (PEP). It is essential for the degradation of carbohydrates via glycolysis. The polypeptide is Enolase (Lawsonia intracellularis (strain PHE/MN1-00)).